The primary structure comprises 1482 residues: Type VII secretion system protein EssC (1482 aa).

Residues M1 to N229 are Cytoplasmic-facing. The chain crosses the membrane as a helical span at residues T230 to V252. The Extracellular portion of the chain corresponds to R253–G256. Residues I257 to S279 form a helical membrane-spanning segment. Topologically, residues E280–G1482 are cytoplasmic. 2 FtsK domains span residues D652 to N846 and Q997 to T1183. ATP contacts are provided by residues G672–S679 and G1014–T1021.

The protein belongs to the EssC family. As to quaternary structure, homooligomer. Interacts with EsaE.

It is found in the cell membrane. In terms of biological role, component of the type VII secretion system (Ess). Required for the secretion of substrates including EsxA and EsxB. However, unable to support secretion of the substrate protein EsxC. In Staphylococcus aureus (strain MRSA252), this protein is Type VII secretion system protein EssC.